Consider the following 142-residue polypeptide: UPF0102 protein Bcen2424_0290 (142 aa).

The span at 1–19 (MCHAAPARPEGARGRPPSG) shows a compositional bias: low complexity. The disordered stretch occupies residues 1 to 27 (MCHAAPARPEGARGRPPSGDNFSGAAR).

Belongs to the UPF0102 family.

In Burkholderia cenocepacia (strain HI2424), this protein is UPF0102 protein Bcen2424_0290.